The following is a 374-amino-acid chain: Diels-Alderase fsa2 (374 aa).

Positions 1–216 (MSNVTVSAFT…MDRVWSPLSW (216 aa)) are beta-sandwich motif. The beta-barrel motif stretch occupies residues 216-374 (WPQVMTESYY…VGTGGQCELS (159 aa)).

The protein belongs to the Diels-Alderase family.

The catalysed reaction is (5S)-3-[(2E,6R,8E,10E,12E)-2,6-dimethyltetradeca-2,8,10,12-tetraenoyl]-5-(hydroxymethyl)pyrrolidine-2,4-dione = trichosetin. Its pathway is mycotoxin biosynthesis. In terms of biological role, diels-Alderase; part of the gene cluster that mediates the biosynthesis of the HIV-1 integrase inhibitor equisetin and of fusarisetin A, both trans-fused decalin-containing tetramic acids showing also antimicrobial activity. The PKS module of fsa1 together with the enoylreductase fsa3 catalyze the formation of the polyketide unit which is then conjugated to L-serine by the condensation domain of the fsa1 NRPS module. Activity of the Dieckmann cyclase domain (RED) results in release of the Dieckmann product intermediate. Diels-Alderase fsa2 is involved in endo-selective Diels-Alder cycloaddition to form the decalin ring, leading to the production of N-desmethylequisetin also called trichosetin. Subsequent N-methylation is carried out by fsa4 to give equisetin. The enzymatic gene responsible for the conversion of equisetin to fusarisetin A has not been identified yet and is probably located outside of the fsa cluster. The sequence is that of Diels-Alderase fsa2 from Fusarium sp. (strain FN080326).